The chain runs to 545 residues: Sphingosine-1-phosphate lyase (545 aa).

Topologically, residues 1–26 (MRPFSGSDCLKPVTEGINRAFGAKEP) are lumenal. A helical; Signal-anchor for type III membrane protein transmembrane segment spans residues 27 to 47 (WQVATITATTVLGGVWLWTVI). The Cytoplasmic segment spans residues 48-545 (CQDENLYIRG…HSMYYTPSQK (498 aa)). Lys342 carries the post-translational modification N6-(pyridoxal phosphate)lysine.

It belongs to the group II decarboxylase family. Sphingosine-1-phosphate lyase subfamily. It depends on pyridoxal 5'-phosphate as a cofactor. Localized to the developing gut primordium during embryogenesis.

It localises to the endoplasmic reticulum membrane. The catalysed reaction is sphinganine 1-phosphate = hexadecanal + phosphoethanolamine. It functions in the pathway lipid metabolism; sphingolipid metabolism. Its function is as follows. Cleaves phosphorylated sphingoid bases (PSBs), such as sphingosine-1-phosphate, into fatty aldehydes and phosphoethanolamine. Sphingolipid catabolism is required for normal development including viability, reproduction and muscle development. The chain is Sphingosine-1-phosphate lyase from Drosophila melanogaster (Fruit fly).